The sequence spans 144 residues: MRLNSLSPAEGAKHSAKRLGRGIGSGLGKTGGRGHKGQKSRTGGGVRRGFEGGQMPLYRRLPKFGFTSLKSLHVAEIRLNDLAKVDGNEVTLEALKAANIITKNILSVKVILAGKIERALVIKGLRVTKGAKAAIEAVGGSIEE.

Residues 1 to 52 (MRLNSLSPAEGAKHSAKRLGRGIGSGLGKTGGRGHKGQKSRTGGGVRRGFEG) form a disordered region. Over residues 21–31 (RGIGSGLGKTG) the composition is skewed to gly residues.

The protein belongs to the universal ribosomal protein uL15 family. Part of the 50S ribosomal subunit.

Binds to the 23S rRNA. The sequence is that of Large ribosomal subunit protein uL15 from Haemophilus ducreyi (strain 35000HP / ATCC 700724).